A 231-amino-acid chain; its full sequence is NADH-ubiquinone oxidoreductase chain 4 (231 aa).

7 consecutive transmembrane segments (helical) span residues 1–21 (PIAG…YGII), 34–54 (MFLP…LTCL), 63–85 (IAYS…TPWG), 89–111 (AMAL…NTTY), 128–148 (ILPM…ATPP), 169–189 (TIIL…HMFL), and 211–231 (LLMT…ELVI).

This sequence belongs to the complex I subunit 4 family.

The protein localises to the mitochondrion membrane. It carries out the reaction a ubiquinone + NADH + 5 H(+)(in) = a ubiquinol + NAD(+) + 4 H(+)(out). Functionally, core subunit of the mitochondrial membrane respiratory chain NADH dehydrogenase (Complex I) that is believed to belong to the minimal assembly required for catalysis. Complex I functions in the transfer of electrons from NADH to the respiratory chain. The immediate electron acceptor for the enzyme is believed to be ubiquinone. In Porthidium ophryomegas (Slender hognose viper), this protein is NADH-ubiquinone oxidoreductase chain 4 (MT-ND4).